The primary structure comprises 201 residues: Large ribosomal subunit protein uL4 (201 aa).

Residues 46–71 (QKTRAEITGTGKKPWRQKGTGRARAG) are disordered.

Belongs to the universal ribosomal protein uL4 family. In terms of assembly, part of the 50S ribosomal subunit.

Its function is as follows. One of the primary rRNA binding proteins, this protein initially binds near the 5'-end of the 23S rRNA. It is important during the early stages of 50S assembly. It makes multiple contacts with different domains of the 23S rRNA in the assembled 50S subunit and ribosome. Forms part of the polypeptide exit tunnel. The chain is Large ribosomal subunit protein uL4 from Shewanella amazonensis (strain ATCC BAA-1098 / SB2B).